The following is a 689-amino-acid chain: Histone-lysine N-methyltransferase MEDEA (689 aa).

Disordered stretches follow at residues 1–20, 51–73, and 169–188; these read MEKENHEDDGEGLPPELNQI, HQSFDLNQPAAEDDNGGDNKSLL, and ELSSEEDEEDEEEDEEEIKK. The tract at residues 1–109 is interaction with FIE; it reads MEKENHEDDG…DEDQDYALEE (109 aa). Residues 171-184 are compositionally biased toward acidic residues; the sequence is SSEEDEEDEEEDEE. The SANT domain occupies 339–389; it reads NNTMWTPVEKDLYLKGIEIFGRNSCDVALNILRGLKTCLEIYNYMREQDQC. The CXC domain occupies 428–532; the sequence is RYPPALKKTT…TLGETPVQIQ (105 aa). The SET domain occupies 544–659; that stretch reads KKILIGKSDV…EGEELFFDYC (116 aa). Residues 666–689 form a disordered region; the sequence is DWSRGREPRKTGASKRSKEARPAR.

This sequence belongs to the class V-like SAM-binding methyltransferase superfamily. Histone-lysine methyltransferase family. EZ subfamily. In terms of assembly, interacts directly with FIE via its N-terminal domain. These two proteins are probably indirectly associated with FIS2. In plants, PcG complexes are probably composed of a member of the EZ family (CLF or MEA), FIE, and a member of the VEFS family (FIS2, VRN2 or EMF2). Interacts with TAF13. Expressed in unpollinated siliques that contain maturing gametophytes. Not expressed at early stages of floral development during early megagametogenesis.

Its subcellular location is the nucleus. It carries out the reaction L-lysyl(27)-[histone H3] + 3 S-adenosyl-L-methionine = N(6),N(6),N(6)-trimethyl-L-lysyl(27)-[histone H3] + 3 S-adenosyl-L-homocysteine + 3 H(+). In terms of biological role, polycomb group (PcG) protein. Catalytic subunit of some PcG multiprotein complex, which methylates 'Lys-27' of histone H3, leading to transcriptional repression of the affected target genes. Required to prevent the proliferation of the central cell of the female gametophyte by repressing target genes before fertilization. After fertilization, it probably also regulates the embryo and endosperm proliferation and anteroposterior organization during seed development. PcG proteins act by forming multiprotein complexes, which are required to maintain the transcriptionally repressive state of homeotic genes throughout development. PcG proteins are not required to initiate repression, but to maintain it during later stages of development. Interacts with the promoter and repress the transcription of genes such as PHE1 and PHE2, that are paternally active and maternally silenced genes. This is Histone-lysine N-methyltransferase MEDEA (MEA) from Arabidopsis thaliana (Mouse-ear cress).